We begin with the raw amino-acid sequence, 154 residues long: Large ribosomal subunit protein uL22 (154 aa).

This sequence belongs to the universal ribosomal protein uL22 family. In terms of assembly, part of the 50S ribosomal subunit.

Its function is as follows. This protein binds specifically to 23S rRNA. It makes multiple contacts with different domains of the 23S rRNA in the assembled 50S subunit and ribosome. In terms of biological role, the globular domain of the protein is located near the polypeptide exit tunnel on the outside of the subunit, while an extended beta-hairpin is found that lines the wall of the exit tunnel in the center of the 70S ribosome. This is Large ribosomal subunit protein uL22 from Methanoregula boonei (strain DSM 21154 / JCM 14090 / 6A8).